A 261-amino-acid chain; its full sequence is Maspardin (261 aa).

An AB hydrolase-1 domain is found at 87–159; it reads FCDGFRKLLD…NSFWLMPAFM (73 aa). The residue at position 257 (serine 257) is a Phosphoserine.

This sequence belongs to the AB hydrolase superfamily. In terms of assembly, interacts with CD4. Interacts with ALDH16A1.

The protein resides in the cytoplasm. Functionally, may play a role as a negative regulatory factor in CD4-dependent T-cell activation. In Rattus norvegicus (Rat), this protein is Maspardin (Spg21).